Here is a 534-residue protein sequence, read N- to C-terminus: NAD(P)H-quinone oxidoreductase chain 4 1 (534 aa).

14 consecutive transmembrane segments (helical) span residues 6–26 (IPWLTTAIAFPLLAALVIPLI), 34–54 (IRWYTLGVALTDFALLVTAFW), 87–107 (LSMPLIILATLITTLATLAAW), 113–133 (PKLFAGLILVMLSAQIGVFAV), 136–156 (LLLFFIMWELELVPVYLLISI), 169–189 (FILYTALGSVFILASTLALAF), 209–229 (ALELLAYAGFLIGFGVKLPIF), 243–263 (SAPVSMILAGVLLKMGGYGLI), 277–297 (FAPLLIVLGIVNIVYGALTAF), 311–331 (ISHMGFVLVGIASFTDLGMNG), 332–352 (AVLQMLSHGFIAAALFFLSGV), 376–396 (FAMFTAAAMASLALPGMSGFV), 418–438 (IAIFLTAVGVILTPIYLLSML), and 464–484 (IFVAVCLLAPIIAIGLYPKLA).

It belongs to the complex I subunit 4 family.

It is found in the cellular thylakoid membrane. It catalyses the reaction a plastoquinone + NADH + (n+1) H(+)(in) = a plastoquinol + NAD(+) + n H(+)(out). The enzyme catalyses a plastoquinone + NADPH + (n+1) H(+)(in) = a plastoquinol + NADP(+) + n H(+)(out). Functionally, NDH-1 shuttles electrons from NAD(P)H, via FMN and iron-sulfur (Fe-S) centers, to quinones in the respiratory chain. The immediate electron acceptor for the enzyme in this species is believed to be plastoquinone. Couples the redox reaction to proton translocation (for every two electrons transferred, four hydrogen ions are translocated across the cytoplasmic membrane), and thus conserves the redox energy in a proton gradient. The sequence is that of NAD(P)H-quinone oxidoreductase chain 4 1 from Picosynechococcus sp. (strain ATCC 27264 / PCC 7002 / PR-6) (Agmenellum quadruplicatum).